The sequence spans 202 residues: Putative transmembrane protein ORF202 (202 aa).

The next 5 helical transmembrane spans lie at 13–33, 40–60, 87–107, 156–176, and 177–197; these read AIAF…FHYI, VFYL…LFLG, YYPV…ISVF, YGAL…HSLS, and LTAF…DLWA.

The protein resides in the host membrane. This is Putative transmembrane protein ORF202 from Acidianus filamentous virus 2 (isolate Italy/Pozzuoli) (AFV-2).